A 314-amino-acid chain; its full sequence is MTEPLRIVFAGTPEFAAEHLKALLDSPHQIVAVYTQPDRPAGRGQKLMPSPVKQLALQHDIPVMQPPTLRAPEAQAELAALKPDLMVVVAYGLILPQVVLDIPRLGCINSHASLLPRWRGAAPIQRAVQAGDAESGVTVMRMEAGLDTGPMLLKAVTPISAQDTGGTLHDRLAELGPPAVLQAIAGLAEGSLVGEAQDDSLANYAHKLNKDEARIDWTRPADELERLVRAFNPWPICHSTLNEEALKVLAADLAEGQGAPGTILSASKDGLIVACGQNALRLTRLQLPGGKPLNFTDLFNSRREKFAIGTVLGQ.

Residue 113-116 (SLLP) participates in (6S)-5,6,7,8-tetrahydrofolate binding.

It belongs to the Fmt family.

The catalysed reaction is L-methionyl-tRNA(fMet) + (6R)-10-formyltetrahydrofolate = N-formyl-L-methionyl-tRNA(fMet) + (6S)-5,6,7,8-tetrahydrofolate + H(+). Functionally, attaches a formyl group to the free amino group of methionyl-tRNA(fMet). The formyl group appears to play a dual role in the initiator identity of N-formylmethionyl-tRNA by promoting its recognition by IF2 and preventing the misappropriation of this tRNA by the elongation apparatus. The polypeptide is Methionyl-tRNA formyltransferase (Pseudomonas syringae pv. tomato (strain ATCC BAA-871 / DC3000)).